Reading from the N-terminus, the 620-residue chain is Zinc finger protein GLIS1 (620 aa).

Residues P108–G132 are disordered. A C2H2-type 1 zinc finger spans residues Q195–H220. The segment at F229–H256 adopts a C2H2-type 2; atypical zinc-finger fold. 3 C2H2-type zinc fingers span residues N262–H286, Y292–H316, and Y322–H346. Positions R340–K356 match the Bipartite nuclear localization signal motif. The segment at A414–Q515 is disordered. Over residues S477–F488 the composition is skewed to low complexity. Residues P489 to S510 are compositionally biased toward pro residues.

The protein belongs to the GLI C2H2-type zinc-finger protein family. Interacts with KLF4. Interacts with POU5F1 and/or POU5F1B. Interacts with SOX2.

It is found in the nucleus. Functionally, acts both as a repressor and an activator of transcription. Binds to the consensus sequence 5'-GACCACCCAC-3'. By controlling the expression of genes involved in cell differentiation inhibits the lineage commitment of multipotent cells. Prevents, for instance, the differentiation of multipotent mesenchymal cells into adipocyte and osteoblast. The chain is Zinc finger protein GLIS1 from Homo sapiens (Human).